Here is a 113-residue protein sequence, read N- to C-terminus: Defense protein 2 (113 aa).

Belongs to the attacin/sarcotoxin-2 family.

The protein localises to the secreted. Its function is as follows. Has antibacterial activity against both Gram-positive and Gram-negative bacteria. The chain is Defense protein 2 from Lonomia obliqua (Moth).